A 170-amino-acid polypeptide reads, in one-letter code: Ribosome maturation factor RimM (170 aa).

Residues 96–169 (EGEFYACDVE…VVQLATLEGL (74 aa)) enclose the PRC barrel domain.

This sequence belongs to the RimM family. In terms of assembly, binds ribosomal protein uS19.

The protein resides in the cytoplasm. Its function is as follows. An accessory protein needed during the final step in the assembly of 30S ribosomal subunit, possibly for assembly of the head region. Essential for efficient processing of 16S rRNA. May be needed both before and after RbfA during the maturation of 16S rRNA. It has affinity for free ribosomal 30S subunits but not for 70S ribosomes. The protein is Ribosome maturation factor RimM of Sorangium cellulosum (strain So ce56) (Polyangium cellulosum (strain So ce56)).